Here is a 308-residue protein sequence, read N- to C-terminus: Mycothiol acetyltransferase (308 aa).

Glu-44 is a 1D-myo-inositol 2-(L-cysteinylamino)-2-deoxy-alpha-D-glucopyranoside binding site. An acetyl-CoA-binding site is contributed by 83–85; the sequence is AVV. The 148-residue stretch at 161–308 folds into the N-acetyltransferase domain; it reads VRLRTYAGSA…DVAYGRPEGD (148 aa). 3 residues coordinate 1D-myo-inositol 2-(L-cysteinylamino)-2-deoxy-alpha-D-glucopyranoside: Glu-188, Lys-230, and Glu-238. Acetyl-CoA contacts are provided by residues 242–244 and 249–255; these read VGV and QGRGLGR. Residue Tyr-276 participates in 1D-myo-inositol 2-(L-cysteinylamino)-2-deoxy-alpha-D-glucopyranoside binding. 281–286 provides a ligand contact to acetyl-CoA; the sequence is NTAALH.

Belongs to the acetyltransferase family. MshD subfamily. As to quaternary structure, monomer.

It catalyses the reaction 1D-myo-inositol 2-(L-cysteinylamino)-2-deoxy-alpha-D-glucopyranoside + acetyl-CoA = mycothiol + CoA + H(+). Catalyzes the transfer of acetyl from acetyl-CoA to desacetylmycothiol (Cys-GlcN-Ins) to form mycothiol. The protein is Mycothiol acetyltransferase of Gordonia bronchialis (strain ATCC 25592 / DSM 43247 / BCRC 13721 / JCM 3198 / KCTC 3076 / NBRC 16047 / NCTC 10667) (Rhodococcus bronchialis).